The primary structure comprises 392 residues: Iripin-1 (392 aa).

A signal peptide spans 1–16; that stretch reads MKPLVPLLFLLVSCRA. 3 N-linked (GlcNAc...) asparagine glycosylation sites follow: Asn-104, Asn-196, and Asn-265.

Belongs to the serpin family. In terms of assembly, interacts with human KLKB1. Interacts with human ST14. Interacts with human PLG (plasmin). Highly expressed in salivary gland. Expressed in midgut and ovary.

The protein localises to the secreted. Its function is as follows. Serine protease inhibitor that modulates blood feeding of ticks on vertebrate species. Modestly inhibits human trypsin, plasma kallikrein (KLKB1), matriptase (ST14) and plasmin (PLG) via a classic serpin inhibitory mechanism. Modestly reduces enzymatic activity of human alpha-chymotrypsin, coagulation factor Xa (F10), factor XIIa (F12), cathepsin G (CTSG), tPA/tissue-type plasminogen activator (PLAT) and uPA/urokinase-type plasminogen activator (PLAU). Probably acts as a substrate rather than an inhibitor for the human neutrophil elastase (ELANE) and thus reduces its enzymatic activity in in vitro assays. Decreases expression of adhesion molecules VCAM1 and CD99 on the surface of human cells. Increases the production of chemokines for neutrophils and monocytes, such as KC/CXCL1, MIP-2/CXCL2 and MIP-1/CCL2, and anti-inflammatory cytokine IL10 in mouse inflammation models. Reduces the recruitment of mouse neutrophils and monocytes to the site of inflammation. Decreases expression of CXCR2 on the surface of mouse neutrophils. Increases expression of integrin ITGAM/ITGB2 on the surface of mouse neutrophils. The polypeptide is Iripin-1 (Ixodes ricinus (Common tick)).